Consider the following 301-residue polypeptide: Phosducin-like protein (301 aa).

N-acetylthreonine is present on T2. A disordered region spans residues 17 to 60 (YSTSEDEDSDHEDKDRGRGAPAISSTPAEAELAGEGISINTGPK). A phosphoserine mark is found at S20, S25, S226, S293, and S296. The 264-residue stretch at 36–299 (APAISSTPAE…TCHSEDSDLE (264 aa)) folds into the Phosducin domain. The tract at residues 158-301 (FKQVFEIPSG…HSEDSDLEID (144 aa)) is thioredoxin fold.

This sequence belongs to the phosducin family. As to quaternary structure, forms a complex with the beta and gamma subunits of the GTP-binding protein, transducin. Interacts with the CCT chaperonin complex.

It localises to the cell projection. The protein resides in the cilium. Functions as a co-chaperone for CCT in the assembly of heterotrimeric G protein complexes, facilitates the assembly of both Gbeta-Ggamma and RGS-Gbeta5 heterodimers. Also acts as a positive regulator of hedgehog signaling and regulates ciliary function. The polypeptide is Phosducin-like protein (Pdcl) (Mus musculus (Mouse)).